A 215-amino-acid chain; its full sequence is Probable peptidyl-prolyl cis-trans isomerase (215 aa).

The PPIase cyclophilin-type domain maps to 38–197 (DGIYAVMETN…RRGAAAKRFV (160 aa)).

It belongs to the cyclophilin-type PPIase family.

It catalyses the reaction [protein]-peptidylproline (omega=180) = [protein]-peptidylproline (omega=0). Its function is as follows. PPIases accelerate the folding of proteins. It catalyzes the cis-trans isomerization of proline imidic peptide bonds in oligopeptides. The chain is Probable peptidyl-prolyl cis-trans isomerase (ppiB) from Treponema pallidum (strain Nichols).